Consider the following 237-residue polypeptide: MTEQALLTDARLYLCTDARTDRGDFADFVDAAYAGGVDIIQLRDKGLEAAEELELLEVLETAARRHGRLWSVNDRADIASLSGAPVLHVGQKDLPLASARKFLGGEAVIGLSTHSHGQIDAAIAASRGAGGLDYFCVGPVWATPTKPGRAAVGLELVRYAAEAAGKTTAKTTGGAAGPTVDGPRLPWFAIGGIDLGNVEQVAAAGAERIVVVRAITEADDPAAAARSLLAALDAGAS.

Residues 41–45 and N73 contribute to the 4-amino-2-methyl-5-(diphosphooxymethyl)pyrimidine site; that span reads QLRDK. Mg(2+) contacts are provided by D74 and D93. A 4-amino-2-methyl-5-(diphosphooxymethyl)pyrimidine-binding site is contributed by S112. 143 to 145 is a 2-[(2R,5Z)-2-carboxy-4-methylthiazol-5(2H)-ylidene]ethyl phosphate binding site; sequence TPT. Residue K146 participates in 4-amino-2-methyl-5-(diphosphooxymethyl)pyrimidine binding. Residue G192 coordinates 2-[(2R,5Z)-2-carboxy-4-methylthiazol-5(2H)-ylidene]ethyl phosphate.

This sequence belongs to the thiamine-phosphate synthase family. The cofactor is Mg(2+).

It catalyses the reaction 2-[(2R,5Z)-2-carboxy-4-methylthiazol-5(2H)-ylidene]ethyl phosphate + 4-amino-2-methyl-5-(diphosphooxymethyl)pyrimidine + 2 H(+) = thiamine phosphate + CO2 + diphosphate. The enzyme catalyses 2-(2-carboxy-4-methylthiazol-5-yl)ethyl phosphate + 4-amino-2-methyl-5-(diphosphooxymethyl)pyrimidine + 2 H(+) = thiamine phosphate + CO2 + diphosphate. The catalysed reaction is 4-methyl-5-(2-phosphooxyethyl)-thiazole + 4-amino-2-methyl-5-(diphosphooxymethyl)pyrimidine + H(+) = thiamine phosphate + diphosphate. It functions in the pathway cofactor biosynthesis; thiamine diphosphate biosynthesis; thiamine phosphate from 4-amino-2-methyl-5-diphosphomethylpyrimidine and 4-methyl-5-(2-phosphoethyl)-thiazole: step 1/1. Its function is as follows. Condenses 4-methyl-5-(beta-hydroxyethyl)thiazole monophosphate (THZ-P) and 2-methyl-4-amino-5-hydroxymethyl pyrimidine pyrophosphate (HMP-PP) to form thiamine monophosphate (TMP). The sequence is that of Thiamine-phosphate synthase from Arthrobacter sp. (strain FB24).